Reading from the N-terminus, the 388-residue chain is Mannitol-1-phosphate 5-dehydrogenase (388 aa).

An NAD(+)-binding site is contributed by 5–16 (AIQFGGGNIGRG). K213 is an active-site residue.

The protein belongs to the mannitol dehydrogenase family. In terms of assembly, monomer.

It carries out the reaction D-mannitol 1-phosphate + NAD(+) = beta-D-fructose 6-phosphate + NADH + H(+). In terms of biological role, catalyzes the NAD(H)-dependent interconversion of D-fructose 6-phosphate and D-mannitol 1-phosphate in the metabolism of mannitol. Has a strong preference for NADH over NADPH. The protein is Mannitol-1-phosphate 5-dehydrogenase (mpdA) of Aspergillus niger (strain ATCC MYA-4892 / CBS 513.88 / FGSC A1513).